The chain runs to 228 residues: MATVMELKATARPKSGKGAARAERRAGRVPAVIYGNKQPPQPISVEEPELRQRILAGRFLTTIFDINLDGKKHRVIPRDFHLDPVKDFPIHVDFMRLGEGATIRVSVPLRLLKADVAPGVKRGGTVNLVTHAIDVECAAESIPQFIEADVGALEISHSLHLSDLQLPPGVKPLAREDVTLVTIVPPSGYAEELKAAAAAGAAAPAAGAAPAAAAAGAKAPAGGGDKKK.

Positions Met-1 to Arg-24 are disordered.

This sequence belongs to the bacterial ribosomal protein bL25 family. CTC subfamily. As to quaternary structure, part of the 50S ribosomal subunit; part of the 5S rRNA/L5/L18/L25 subcomplex. Contacts the 5S rRNA. Binds to the 5S rRNA independently of L5 and L18.

Functionally, this is one of the proteins that binds to the 5S RNA in the ribosome where it forms part of the central protuberance. The chain is Large ribosomal subunit protein bL25 from Nitrobacter winogradskyi (strain ATCC 25391 / DSM 10237 / CIP 104748 / NCIMB 11846 / Nb-255).